Reading from the N-terminus, the 55-residue chain is A-type ATP synthase subunit G (55 aa).

In terms of assembly, has multiple subunits, A(3), B(3), C, D, E, F, G, I and K(x); there may be a few other subunits as well.

The protein resides in the cell membrane. In terms of biological role, component of the A-type ATP synthase that produces ATP from ADP in the presence of a proton gradient across the membrane. The polypeptide is A-type ATP synthase subunit G (atpG) (Methanosarcina mazei (strain ATCC BAA-159 / DSM 3647 / Goe1 / Go1 / JCM 11833 / OCM 88) (Methanosarcina frisia)).